A 435-amino-acid polypeptide reads, in one-letter code: Probable glycine dehydrogenase (decarboxylating) subunit 1 (435 aa).

Belongs to the GcvP family. N-terminal subunit subfamily. As to quaternary structure, the glycine cleavage system is composed of four proteins: P, T, L and H. In this organism, the P 'protein' is a heterodimer of two subunits.

It carries out the reaction N(6)-[(R)-lipoyl]-L-lysyl-[glycine-cleavage complex H protein] + glycine + H(+) = N(6)-[(R)-S(8)-aminomethyldihydrolipoyl]-L-lysyl-[glycine-cleavage complex H protein] + CO2. Functionally, the glycine cleavage system catalyzes the degradation of glycine. The P protein binds the alpha-amino group of glycine through its pyridoxal phosphate cofactor; CO(2) is released and the remaining methylamine moiety is then transferred to the lipoamide cofactor of the H protein. The sequence is that of Probable glycine dehydrogenase (decarboxylating) subunit 1 from Coprothermobacter proteolyticus (strain ATCC 35245 / DSM 5265 / OCM 4 / BT).